The chain runs to 269 residues: Phosphate import ATP-binding protein PstB (269 aa).

Residues 14–253 (LSLENVSISY…EFNSTKKIFN (240 aa)) enclose the ABC transporter domain. 46–53 (GPSGCGKS) provides a ligand contact to ATP.

Belongs to the ABC transporter superfamily. Phosphate importer (TC 3.A.1.7) family. In terms of assembly, the complex is composed of two ATP-binding proteins (PstB), two transmembrane proteins (PstC and PstA) and a solute-binding protein (PstS).

It localises to the cell inner membrane. It catalyses the reaction phosphate(out) + ATP + H2O = ADP + 2 phosphate(in) + H(+). Functionally, part of the ABC transporter complex PstSACB involved in phosphate import. Responsible for energy coupling to the transport system. The protein is Phosphate import ATP-binding protein PstB of Prochlorococcus marinus (strain MIT 9312).